Reading from the N-terminus, the 308-residue chain is Ribosomal RNA small subunit methyltransferase H (308 aa).

Residues 32–34 (GGH), Asp-51, Phe-78, Asp-99, and Gln-106 each bind S-adenosyl-L-methionine.

Belongs to the methyltransferase superfamily. RsmH family.

It localises to the cytoplasm. The catalysed reaction is cytidine(1402) in 16S rRNA + S-adenosyl-L-methionine = N(4)-methylcytidine(1402) in 16S rRNA + S-adenosyl-L-homocysteine + H(+). In terms of biological role, specifically methylates the N4 position of cytidine in position 1402 (C1402) of 16S rRNA. The chain is Ribosomal RNA small subunit methyltransferase H from Campylobacter curvus (strain 525.92).